The following is a 193-amino-acid chain: Oligoribonuclease (193 aa).

The Exonuclease domain occupies 14-177 (LIWIDLEMTG…SDIYDSIAEL (164 aa)). Tyr135 is an active-site residue.

It belongs to the oligoribonuclease family.

The protein localises to the cytoplasm. Its function is as follows. 3'-to-5' exoribonuclease specific for small oligoribonucleotides. The polypeptide is Oligoribonuclease (Xylella fastidiosa (strain Temecula1 / ATCC 700964)).